A 143-amino-acid polypeptide reads, in one-letter code: Type II secretion system core protein G (143 aa).

Positions 1–8 (MQKRRQSG) are cleaved as a propeptide — leader sequence. F9 carries the N-methylphenylalanine modification. Residues 9-29 (FTLLEVMVVIVILGILASLVV) form a helical membrane-spanning segment. The segment at 70–92 (QGLDALVNKPTAAPEPRSYRDGG) is disordered.

This sequence belongs to the GSP G family. In terms of assembly, type II secretion system is composed of four main components: the outer membrane complex, the inner membrane complex, the cytoplasmic secretion ATPase and the periplasm-spanning pseudopilus. Forms homomultimers. Post-translationally, cleaved by the prepilin peptidase. Methylated by prepilin peptidase at the amino group of the N-terminal phenylalanine once the leader sequence is cleaved.

It is found in the cell inner membrane. Its function is as follows. Core component of the type II secretion system required for the energy-dependent secretion of extracellular factors such as proteases and toxins from the periplasm. Pseudopilin (pilin-like) protein that polymerizes to form the pseudopilus. Further polymerization triggers pseudopilus growth. The sequence is that of Type II secretion system core protein G (exeG) from Aeromonas hydrophila.